The sequence spans 363 residues: 5-formaminoimidazole-4-carboxamide-1-(beta)-D-ribofuranosyl 5'-monophosphate synthetase (363 aa).

The 5-amino-1-(5-phospho-beta-D-ribosyl)imidazole-4-carboxamide site is built by His-29 and Ser-96. Residues 118–350 enclose the ATP-grasp domain; that stretch reads RDILRWESER…MGRRVAREIR (233 aa). ATP-binding positions include 148 to 210 and Glu-232; that span reads PEEI…TNFC. Asn-260 contributes to the 5-amino-1-(5-phospho-beta-D-ribosyl)imidazole-4-carboxamide binding site. Positions 299 and 312 each coordinate Mg(2+).

It belongs to the phosphohexose mutase family. It depends on Mg(2+) as a cofactor. Requires Mn(2+) as cofactor.

It catalyses the reaction 5-amino-1-(5-phospho-beta-D-ribosyl)imidazole-4-carboxamide + formate + ATP = 5-formamido-1-(5-phospho-D-ribosyl)imidazole-4-carboxamide + ADP + phosphate. The protein operates within purine metabolism; IMP biosynthesis via de novo pathway; 5-formamido-1-(5-phospho-D-ribosyl)imidazole-4-carboxamide from 5-amino-1-(5-phospho-D-ribosyl)imidazole-4-carboxamide (formate route): step 1/1. Catalyzes the ATP- and formate-dependent formylation of 5-aminoimidazole-4-carboxamide-1-beta-d-ribofuranosyl 5'-monophosphate (AICAR) to 5-formaminoimidazole-4-carboxamide-1-beta-d-ribofuranosyl 5'-monophosphate (FAICAR) in the absence of folates. The protein is 5-formaminoimidazole-4-carboxamide-1-(beta)-D-ribofuranosyl 5'-monophosphate synthetase of Methanothermobacter thermautotrophicus (strain ATCC 29096 / DSM 1053 / JCM 10044 / NBRC 100330 / Delta H) (Methanobacterium thermoautotrophicum).